A 106-amino-acid chain; its full sequence is Large ribosomal subunit protein bL21 (106 aa).

The protein belongs to the bacterial ribosomal protein bL21 family. Part of the 50S ribosomal subunit. Contacts protein L20.

Its function is as follows. This protein binds to 23S rRNA in the presence of protein L20. The sequence is that of Large ribosomal subunit protein bL21 from Chlamydia pneumoniae (Chlamydophila pneumoniae).